Reading from the N-terminus, the 98-residue chain is Large ribosomal subunit protein uL23 (98 aa).

The protein belongs to the universal ribosomal protein uL23 family. Part of the 50S ribosomal subunit. Contacts protein L29, and trigger factor when it is bound to the ribosome.

Functionally, one of the early assembly proteins it binds 23S rRNA. One of the proteins that surrounds the polypeptide exit tunnel on the outside of the ribosome. Forms the main docking site for trigger factor binding to the ribosome. The chain is Large ribosomal subunit protein uL23 from Lactobacillus johnsonii (strain CNCM I-12250 / La1 / NCC 533).